Here is a 126-residue protein sequence, read N- to C-terminus: Protein ApaG (126 aa).

Residues 2 to 126 (KQLESSIRIE…FRLAAPGLLH (125 aa)) form the ApaG domain.

The chain is Protein ApaG from Shewanella loihica (strain ATCC BAA-1088 / PV-4).